Consider the following 105-residue polypeptide: Met repressor (105 aa).

The protein belongs to the MetJ family. Homodimer.

It localises to the cytoplasm. Functionally, this regulatory protein, when combined with SAM (S-adenosylmethionine) represses the expression of the methionine regulon and of enzymes involved in SAM synthesis. This Shigella boydii serotype 18 (strain CDC 3083-94 / BS512) protein is Met repressor.